The primary structure comprises 360 residues: Protein Wnt-2 (360 aa).

Residues 1–25 (MNAPLGGIWLWLPLLLTWLTPEVNS) form the signal peptide. Intrachain disulfides connect Cys-76-Cys-87, Cys-127-Cys-135, Cys-137-Cys-157, Cys-206-Cys-220, Cys-208-Cys-215, Cys-278-Cys-309, Cys-294-Cys-304, Cys-308-Cys-348, Cys-324-Cys-339, Cys-326-Cys-336, and Cys-331-Cys-332. A lipid anchor (O-palmitoleoyl serine; by PORCN) is attached at Ser-212. Asn-295 carries N-linked (GlcNAc...) asparagine glycosylation.

It belongs to the Wnt family. Palmitoleoylation is required for efficient binding to frizzled receptors. Depalmitoleoylation leads to Wnt signaling pathway inhibition.

It is found in the secreted. The protein resides in the extracellular space. It localises to the extracellular matrix. In terms of biological role, ligand for members of the frizzled family of seven transmembrane receptors. Functions in the canonical Wnt signaling pathway that results in activation of transcription factors of the TCF/LEF family. Functions as a upstream regulator of FGF10 expression. Plays an important role in embryonic lung development. May contribute to embryonic brain development by regulating the proliferation of dopaminergic precursors and neurons. This is Protein Wnt-2 (WNT2) from Gorilla gorilla gorilla (Western lowland gorilla).